A 368-amino-acid chain; its full sequence is Phospho-N-acetylmuramoyl-pentapeptide-transferase (368 aa).

9 helical membrane-spanning segments follow: residues 50 to 70, 95 to 115, 117 to 137, 156 to 176, 183 to 203, 218 to 238, 242 to 262, 284 to 304, and 347 to 367; these read LLAL…VVPL, PTMG…ILAG, SPLV…GWLD, LCLQ…QQGW, ITLP…LAVF, LDGL…LWLA, PAIA…LLHN, AIAI…LFVL, and TQVV…CWLL.

The protein belongs to the glycosyltransferase 4 family. MraY subfamily. Mg(2+) is required as a cofactor.

It localises to the cell inner membrane. It catalyses the reaction UDP-N-acetyl-alpha-D-muramoyl-L-alanyl-gamma-D-glutamyl-meso-2,6-diaminopimeloyl-D-alanyl-D-alanine + di-trans,octa-cis-undecaprenyl phosphate = di-trans,octa-cis-undecaprenyl diphospho-N-acetyl-alpha-D-muramoyl-L-alanyl-D-glutamyl-meso-2,6-diaminopimeloyl-D-alanyl-D-alanine + UMP. Its pathway is cell wall biogenesis; peptidoglycan biosynthesis. Functionally, catalyzes the initial step of the lipid cycle reactions in the biosynthesis of the cell wall peptidoglycan: transfers peptidoglycan precursor phospho-MurNAc-pentapeptide from UDP-MurNAc-pentapeptide onto the lipid carrier undecaprenyl phosphate, yielding undecaprenyl-pyrophosphoryl-MurNAc-pentapeptide, known as lipid I. This Synechococcus sp. (strain ATCC 27144 / PCC 6301 / SAUG 1402/1) (Anacystis nidulans) protein is Phospho-N-acetylmuramoyl-pentapeptide-transferase.